The chain runs to 266 residues: MKYSGWPEPGELVVGKIDEIEDFGVFVDLDEYEGKRGLCHISEVASGWIKNVRDHVNEGQTVVAKVLDVDESAQQIDLSIKDVNDHQRKEKIQEWKNEQKADNWMELAFGEDLDDETYAAIANELLAEFGSMYDGFESAAIHGKDALEDVDLSEEEIDAIVQTARNNVSVPYVQVTGYVDLSCPESDGVDIIKEALQAAEGNGEVPDEIELEVTYVGSPEYRIQVQAPDYKTAEDALEESADRAAKVVEQHGGSGQFHRERSEDDE.

Residues 10–81 form the S1 motif domain; sequence GELVVGKIDE…SAQQIDLSIK (72 aa). A disordered region spans residues 233–266; sequence AEDALEESADRAAKVVEQHGGSGQFHRERSEDDE. Basic and acidic residues-rich tracts occupy residues 240-249 and 257-266; these read SADRAAKVVE and FHRERSEDDE.

This sequence belongs to the eIF-2-alpha family. In terms of assembly, heterotrimer composed of an alpha, a beta and a gamma chain.

Its function is as follows. eIF-2 functions in the early steps of protein synthesis by forming a ternary complex with GTP and initiator tRNA. In Haloarcula marismortui (strain ATCC 43049 / DSM 3752 / JCM 8966 / VKM B-1809) (Halobacterium marismortui), this protein is Translation initiation factor 2 subunit alpha.